The sequence spans 599 residues: Putative clathrin assembly protein At1g03050 (599 aa).

The region spanning 26 to 162 (GRSASLSELD…DFRMQARHGK (137 aa)) is the ENTH domain. Disordered regions lie at residues 332–382 (KQSK…PEEE) and 580–599 (QGHMNLRQNQNQPYSYTPQY). Acidic residues-rich tracts occupy residues 341 to 359 (ADEDDDEARTEEVNEEQED) and 373 to 382 (EEDDVKPEEE). The segment covering 585–599 (LRQNQNQPYSYTPQY) has biased composition (polar residues).

It is found in the membrane. Its subcellular location is the clathrin-coated pit. The protein resides in the golgi apparatus. It localises to the cytoplasmic vesicle. The protein localises to the clathrin-coated vesicle. This chain is Putative clathrin assembly protein At1g03050, found in Arabidopsis thaliana (Mouse-ear cress).